We begin with the raw amino-acid sequence, 126 residues long: Fluoride-specific ion channel FluC (126 aa).

The next 4 helical transmembrane spans lie at 4–24 (FAIL…RYLV), 38–58 (YGTL…IAAF), 71–91 (IIGL…MDNV), and 104–124 (LNVV…FQLL). Na(+) contacts are provided by glycine 78 and threonine 81.

It belongs to the fluoride channel Fluc/FEX (TC 1.A.43) family.

It localises to the cell inner membrane. It catalyses the reaction fluoride(in) = fluoride(out). Its activity is regulated as follows. Na(+) is not transported, but it plays an essential structural role and its presence is essential for fluoride channel function. Its function is as follows. Fluoride-specific ion channel. Important for reducing fluoride concentration in the cell, thus reducing its toxicity. In Vibrio vulnificus (strain CMCP6), this protein is Fluoride-specific ion channel FluC.